Consider the following 344-residue polypeptide: Treponemal membrane protein A (344 aa).

An N-terminal signal peptide occupies residues 1–21; the sequence is MKLKSLVFSLSALFLVLGFTG. The N-palmitoyl cysteine moiety is linked to residue Cys-22. A lipid anchor (S-diacylglycerol cysteine) is attached at Cys-22. Residues 257 to 344 are disordered; the sequence is AAKTKQELSA…TEEPIEGGVQ (88 aa). Residues 260–277 are compositionally biased toward basic and acidic residues; the sequence is TKQELSAKLANEADKESP. 2 stretches are compositionally biased toward acidic residues: residues 312-322 and 335-344; these read VPVEEMNENSS and TEEPIEGGVQ.

The protein to T.pallidum TmpA.

The protein localises to the cell membrane. In Treponema phagedenis, this protein is Treponemal membrane protein A (tmpA).